We begin with the raw amino-acid sequence, 195 residues long: Protease (195 aa).

The Peptidase A2 domain occupies 71–149 (ALMLVDTGAE…DKWQILGRDV (79 aa)). Asp-76 is a catalytic residue.

The chain is Protease from Bos taurus (Bovine).